A 955-amino-acid polypeptide reads, in one-letter code: MSKTNKSKSGSRSSRSRSASRSRSRSFSKSRSRSRSLSRSRKRRLSSRSRSRSYSPAHNRERNHPRVYQNRDFRGHNRGYRRPYYFRGRNRGFYPWGQYNRGGYGNYRSNWQNYRQAYSPRRGRSRSRSPKRRSPSPRSRSHSRNSDKSSSDRSRRSSSSRSSSNHSRVESSKRKSAKEKKSSSKDSRPSQAAGDNQGDEAKEQTFSGGTSQDTKASESSKPWPDATYGTGSASRASAVSELSPRERSPALKSPLQSVVVRRRSPRPSPVPKPSPPLSSTSQMGSTLPSGAGYQSGTHQGQFDHGSGSLSPSKKSPVGKSPPSTGSTYGSSQKEESAASGGAAYTKRYLEEQKTENGKDKEQKQTNTDKEKIKEKGSFSDTGLGDGKMKSDSFAPKTDSEKPFRGSQSPKRYKLRDDFEKKMADFHKEEMDDQDKDKAKGRKESEFDDEPKFMSKVIGANKNQEEEKSGKWEGLVYAPPGKEKQRKTEELEEESFPERSKKEDRGKRSEGGHRGFVPEKNFRVTAYKAVQEKSSSPPPRKTSESRDKLGAKGDFPTGKSSFSITREAQVNVRMDSFDEDLARPSGLLAQERKLCRDLVHSNKKEQEFRSIFQHIQSAQSQRSPSELFAQHIVTIVHHVKEHHFGSSGMTLHERFTKYLKRGTEQEAAKNKKSPEIHRRIDISPSTFRKHGLAHDEMKSPREPGYKAEGKYKDDPVDLRLDIERRKKHKERDLKRGKSRESVDSRDSSHSRERSAEKTEKTHKGSKKQKKHRRARDRSRSSSSSSQSSHSYKAEEYTEETEEREESTTGFDKSRLGTKDFVGPSERGGGRARGTFQFRARGRGWGRGNYSGNNNNNSNNDFQKRNREEEWDPEYTPKSKKYYLHDDREGEGSDKWVSRGRGRGAFPRGRGRFMFRKSSTSPKWAHDKFSGEEGEIEDDESGTENREEKDNIQPTTE.

Residues 1–94 form a disordered region; sequence MSKTNKSKSG…YFRGRNRGFY (94 aa). Serine 2 bears the N-acetylserine mark. Residues 2–190 are required for mRNA splicing activation; the sequence is SKTNKSKSGS…KSSSKDSRPS (189 aa). The segment covering 14-51 has biased composition (basic residues); the sequence is SRSRSASRSRSRSFSKSRSRSRSLSRSRKRRLSSRSRS. Arginine 17 is subject to Dimethylated arginine. Over residues 58–75 the composition is skewed to basic and acidic residues; sequence HNRERNHPRVYQNRDFRG. Arginine 66 carries the asymmetric dimethylarginine modification. The span at 82 to 94 shows a compositional bias: low complexity; that stretch reads RPYYFRGRNRGFY. An asymmetric dimethylarginine mark is found at arginine 101 and arginine 108. The segment at 117-559 is disordered; it reads AYSPRRGRSR…AKGDFPTGKS (443 aa). A compositionally biased stretch (basic residues) spans 121 to 143; sequence RRGRSRSRSPKRRSPSPRSRSHS. The span at 144–155 shows a compositional bias: basic and acidic residues; sequence RNSDKSSSDRSR. A compositionally biased stretch (low complexity) spans 157-166; it reads SSSSRSSSNH. The span at 167-188 shows a compositional bias: basic and acidic residues; the sequence is SRVESSKRKSAKEKKSSSKDSR. Lysine 202 participates in a covalent cross-link: Glycyl lysine isopeptide (Lys-Gly) (interchain with G-Cter in SUMO1); alternate. Residue lysine 202 forms a Glycyl lysine isopeptide (Lys-Gly) (interchain with G-Cter in SUMO2); alternate linkage. The span at 204–220 shows a compositional bias: polar residues; it reads QTFSGGTSQDTKASESS. Lysine 215 is covalently cross-linked (Glycyl lysine isopeptide (Lys-Gly) (interchain with G-Cter in SUMO2)). Serine 220 is modified (phosphoserine). Lysine 221 is covalently cross-linked (Glycyl lysine isopeptide (Lys-Gly) (interchain with G-Cter in SUMO2); alternate). Lysine 221 is subject to N6-acetyllysine; alternate. Phosphoserine is present on residues serine 232, serine 237, serine 240, serine 243, and serine 248. A Glycyl lysine isopeptide (Lys-Gly) (interchain with G-Cter in SUMO2); alternate cross-link involves residue lysine 252. Lysine 252 carries the N6-methyllysine; alternate modification. Residues serine 253 and serine 257 each carry the phosphoserine modification. A compositionally biased stretch (pro residues) spans 266–276; that stretch reads RPSPVPKPSPP. Positions 282–300 are enriched in polar residues; it reads QMGSTLPSGAGYQSGTHQG. A compositionally biased stretch (low complexity) spans 305-331; that stretch reads GSGSLSPSKKSPVGKSPPSTGSTYGSS. Residues serine 315, serine 320, and serine 323 each carry the phosphoserine modification. Phosphothreonine is present on threonine 324. Serine 326 is subject to Phosphoserine. Tyrosine 328 is subject to Phosphotyrosine. Lysine 333 is covalently cross-linked (Glycyl lysine isopeptide (Lys-Gly) (interchain with G-Cter in SUMO2)). A Phosphoserine modification is found at serine 339. Lysine 346 is covalently cross-linked (Glycyl lysine isopeptide (Lys-Gly) (interchain with G-Cter in SUMO2); alternate). An N6-acetyllysine; alternate modification is found at lysine 346. A compositionally biased stretch (basic and acidic residues) spans 347 to 377; that stretch reads RYLEEQKTENGKDKEQKQTNTDKEKIKEKGS. Glycyl lysine isopeptide (Lys-Gly) (interchain with G-Cter in SUMO2) cross-links involve residues lysine 353 and lysine 375. Residues 359–955 are required for mRNA decay activity; it reads DKEQKQTNTD…EKDNIQPTTE (597 aa). A phosphoserine mark is found at serine 377 and serine 379. A Glycyl lysine isopeptide (Lys-Gly) (interchain with G-Cter in SUMO1); alternate cross-link involves residue lysine 387. Lysine 387 is covalently cross-linked (Glycyl lysine isopeptide (Lys-Gly) (interchain with G-Cter in SUMO2); alternate). Glycyl lysine isopeptide (Lys-Gly) (interchain with G-Cter in SUMO2) cross-links involve residues lysine 389 and lysine 396. A Phosphothreonine modification is found at threonine 397. Lysine 401 is covalently cross-linked (Glycyl lysine isopeptide (Lys-Gly) (interchain with G-Cter in SUMO2)). Serine 406 and serine 408 each carry phosphoserine. Basic and acidic residues predominate over residues 414-452; the sequence is LRDDFEKKMADFHKEEMDDQDKDKAKGRKESEFDDEPKF. Glycyl lysine isopeptide (Lys-Gly) (interchain with G-Cter in SUMO2) cross-links involve residues lysine 421 and lysine 427. Position 444 is a phosphoserine (serine 444). Residue lysine 451 forms a Glycyl lysine isopeptide (Lys-Gly) (interchain with G-Cter in SUMO1); alternate linkage. Residues lysine 451 and lysine 455 each participate in a glycyl lysine isopeptide (Lys-Gly) (interchain with G-Cter in SUMO2); alternate cross-link. Lysine 455 carries the N6-acetyllysine; alternate modification. Residues lysine 461 and lysine 467 each participate in a glycyl lysine isopeptide (Lys-Gly) (interchain with G-Cter in SUMO2) cross-link. Serine 468 carries the phosphoserine modification. Glycyl lysine isopeptide (Lys-Gly) (interchain with G-Cter in SUMO2); alternate cross-links involve residues lysine 470 and lysine 481. N6-acetyllysine; alternate is present on residues lysine 470 and lysine 481. Lysine 486 participates in a covalent cross-link: Glycyl lysine isopeptide (Lys-Gly) (interchain with G-Cter in SUMO2). Basic and acidic residues predominate over residues 495–521; the sequence is FPERSKKEDRGKRSEGGHRGFVPEKNF. An N6-acetyllysine modification is found at lysine 519. Lysine 527 participates in a covalent cross-link: Glycyl lysine isopeptide (Lys-Gly) (interchain with G-Cter in SUMO2); alternate. The residue at position 527 (lysine 527) is an N6-acetyllysine; alternate. The residue at position 535 (serine 535) is a Phosphoserine. A compositionally biased stretch (basic and acidic residues) spans 540–550; the sequence is KTSESRDKLGA. Lysine 551 is covalently cross-linked (Glycyl lysine isopeptide (Lys-Gly) (interchain with G-Cter in SUMO2)). Residue 552-559 coordinates ATP; the sequence is GDFPTGKS. Lysine 558 is covalently cross-linked (Glycyl lysine isopeptide (Lys-Gly) (interchain with G-Cter in SUMO2); alternate). Lysine 558 carries the post-translational modification N6-acetyllysine; alternate. Serine 560, serine 562, and serine 575 each carry phosphoserine. Residue lysine 602 forms a Glycyl lysine isopeptide (Lys-Gly) (interchain with G-Cter in SUMO2) linkage. Residues serine 619, serine 622, serine 672, serine 682, and serine 684 each carry the phosphoserine modification. Over residues 663 to 680 the composition is skewed to basic and acidic residues; that stretch reads EQEAAKNKKSPEIHRRID. The tract at residues 663–955 is disordered; it reads EQEAAKNKKS…EKDNIQPTTE (293 aa). Over residues 691 to 761 the composition is skewed to basic and acidic residues; the sequence is LAHDEMKSPR…RSAEKTEKTH (71 aa). A Glycyl lysine isopeptide (Lys-Gly) (interchain with G-Cter in SUMO2) cross-link involves residue lysine 697. Residue serine 698 is modified to Phosphoserine. Glycyl lysine isopeptide (Lys-Gly) (interchain with G-Cter in SUMO2) cross-links involve residues lysine 705, lysine 709, lysine 711, lysine 756, and lysine 759. Residues 762–775 show a composition bias toward basic residues; sequence KGSKKQKKHRRARD. The segment covering 779 to 789 has biased composition (low complexity); that stretch reads SSSSSSQSSHS. Lysine 811 carries the post-translational modification N6-acetyllysine. Arginine 845 is subject to Asymmetric dimethylarginine. Residues 848-859 show a composition bias toward low complexity; it reads YSGNNNNNSNND. A Phosphothreonine modification is found at threonine 874. Glycyl lysine isopeptide (Lys-Gly) (interchain with G-Cter in SUMO2) cross-links involve residues lysine 876 and lysine 879. Basic and acidic residues predominate over residues 881–895; it reads YLHDDREGEGSDKWV. 2 positions are modified to phosphoserine: serine 928 and serine 939. Residues 930–940 are compositionally biased toward acidic residues; it reads EEGEIEDDESG.

Belongs to the BCLAF1/THRAP3 family. As to quaternary structure, associated with the large multiprotein complex TRAP (Mediator complex-like). Interacts with SFPQ; the interaction is dependent on SFPQ phosphorylation at 'Thr-687' and inhibits binding of SFPQ to an ESS1 exonic splicing silencer element-containing RNA. Interacts with NXF1. Component of the SNARP complex which consists at least of SNIP1, SNW1, THRAP3, BCLAF1 and PNN. Associated with spliced mRNP complexes. Interacts with HELZ2 and PPARG. Interacts with CLOCK and BMAL1. Component of a MACOM-like complex, named WTAP complex, composed of WTAP, ZC3H13, CBLL1, KIAA1429, RBM15, BCLAF1 and THRAP3. In terms of processing, ADP-ribosylation during genotoxic stress promotes accumulation in nuclear speckles. As to expression, ubiquitous.

The protein localises to the nucleus. It is found in the nucleoplasm. It localises to the nucleus speckle. In terms of biological role, involved in pre-mRNA splicing. Remains associated with spliced mRNA after splicing which probably involves interactions with the exon junction complex (EJC). Can trigger mRNA decay which seems to be independent of nonsense-mediated decay involving premature stop codons (PTC) recognition. May be involved in nuclear mRNA decay. Involved in regulation of signal-induced alternative splicing. During splicing of PTPRC/CD45 is proposed to sequester phosphorylated SFPQ from PTPRC/CD45 pre-mRNA in resting T-cells. Involved in cyclin-D1/CCND1 mRNA stability probably by acting as component of the SNARP complex which associates with both the 3'end of the CCND1 gene and its mRNA. Involved in response to DNA damage. Is excluced from DNA damage sites in a manner that parallels transcription inhibition; the function may involve the SNARP complex. Initially thought to play a role in transcriptional coactivation through its association with the TRAP complex; however, it is not regarded as a stable Mediator complex subunit. Cooperatively with HELZ2, enhances the transcriptional activation mediated by PPARG, maybe through the stabilization of the PPARG binding to DNA in presence of ligand. May play a role in the terminal stage of adipocyte differentiation. Plays a role in the positive regulation of the circadian clock. Acts as a coactivator of the CLOCK-BMAL1 heterodimer and promotes its transcriptional activator activity and binding to circadian target genes. This Homo sapiens (Human) protein is Thyroid hormone receptor-associated protein 3.